A 379-amino-acid polypeptide reads, in one-letter code: tRNA-specific 2-thiouridylase MnmA (379 aa).

ATP contacts are provided by residues 23 to 30 (AMSGGVDS) and L49. Residue C117 is the Nucleophile of the active site. An intrachain disulfide couples C117 to C214. Position 141 (G141) interacts with ATP. Residues 163–165 (RDQ) form an interaction with tRNA region. The active-site Cysteine persulfide intermediate is the C214.

Belongs to the MnmA/TRMU family.

The protein localises to the cytoplasm. It carries out the reaction S-sulfanyl-L-cysteinyl-[protein] + uridine(34) in tRNA + AH2 + ATP = 2-thiouridine(34) in tRNA + L-cysteinyl-[protein] + A + AMP + diphosphate + H(+). Catalyzes the 2-thiolation of uridine at the wobble position (U34) of tRNA, leading to the formation of s(2)U34. The protein is tRNA-specific 2-thiouridylase MnmA of Cereibacter sphaeroides (strain KD131 / KCTC 12085) (Rhodobacter sphaeroides).